We begin with the raw amino-acid sequence, 588 residues long: MPLDNKVQLNENGKEVNNNNNNDEDLKIQDNHNNKEPFFNRSELVRLLIQSLNSLGYDKSAEFLEKDSGISLQSKEINQFSECVVSGDWNKVEELLPFLKLNEFDTNNVKFLVYSQKFLEYLENHKIKEALECLRLEITPYTKDTSRLQVLTSLIMTSNSSETKKQIKQRSSRVNLLDDIRKYVNPNIMLPENRLEQLIKQSIQYQMGKCLYHNTSEQFINLFKDHTCDKSQMPLDVLFTLKDKHRDEIWFITFSHDGQRLASSSKDNTIIIWDMSTIYLDQPTEPKVMFILLGHTKEVSHLSWSPNDKYLLSASNDSTVKLWNTNDGTLLKTFTKHSDAVTCCGWHPDNKRFVSGGNDKNIYLWSIENLDLTNSNNNNNNHNNNNSNINGNSINGSNNNGNNNNNISPIKSWACARVNDLSIHKDGKQLIIICQEKKLRIYDLENEKTPEVVLMETDAITSMELSNDCNFALVNTSNQEIHLWDLEKQIIVQKYRGHKQGRFVIRSCFGGVDQAFVLSGSEDSTIYIWHRSSGILLETLSRHSGTVNTVCWSPCNPFIFCSASDDQTIKVWSRSNNHNSFINNLTNK.

A disordered region spans residues 1-32 (MPLDNKVQLNENGKEVNNNNNNDEDLKIQDNH). The LisH domain occupies 40 to 72 (NRSELVRLLIQSLNSLGYDKSAEFLEKDSGISL). The CTLH domain maps to 73-129 (QSKEINQFSECVVSGDWNKVEELLPFLKLNEFDTNNVKFLVYSQKFLEYLENHKIKE). 3 WD repeats span residues 244-283 (KHRD…LDQP), 294-333 (GHTK…LLKT), and 336-375 (KHSD…LTNS). Residues 376 to 403 (NNNNNNHNNNNSNINGNSINGSNNNGNN) form a disordered region. WD repeat units lie at residues 413–452 (WACA…TPEV), 455–494 (METD…IVQK), 499–539 (KQGR…LLET), and 542–582 (RHSG…NSFI).

The protein is WD repeat-containing protein DDB_G0349043 of Dictyostelium discoideum (Social amoeba).